We begin with the raw amino-acid sequence, 211 residues long: Small ribosomal subunit protein uS3 (211 aa).

The KH type-2 domain occupies 16-85 (IDEYFKTKLV…NPQIEVKQVE (70 aa)).

Belongs to the universal ribosomal protein uS3 family. Part of the 30S ribosomal subunit.

In terms of biological role, binds the lower part of the 30S subunit head. The chain is Small ribosomal subunit protein uS3 from Methanococcus maripaludis (strain DSM 14266 / JCM 13030 / NBRC 101832 / S2 / LL).